The sequence spans 537 residues: Cytoplasmic dynein 2 intermediate chain 2 (537 aa).

Position 15 is a phosphoserine (serine 15). Positions 80–93 are DYNLL2 binding; the sequence is RTHADAQVQTEAPE. The tract at residues 107–132 is DYNLRB1 binding; sequence LRLEAFLRRVEAMVIRELNNNWQSHA. WD repeat units follow at residues 216-256, 265-309, 391-431, 434-474, and 481-521; these read EVPS…DPLL, THTD…QLRL, PHGG…PLTS, LSHK…QKPT, and QDGS…TEQG.

This sequence belongs to the dynein light intermediate chain family. The cytoplasmic dynein 2 complex consists of two catalytic heavy chains (HCs) and a number of non-catalytic subunits presented by intermediate chains (ICs), light intermediate chains (LICs) and light chains (LCs). Among them, a heavy chain (DYNC2H1), two intermediate chains (DYNC2I2 and DYNC2I1), a light intermediate chain (DYNC2LI1), and a light chain (DYNLT2B) are unique to the cytoplasmic dynein complex 2, but a subset of the light chains are also shared by dynein-1 and dynein-2 complexes. Interacts with DYNC2I1; their C-terminal domains each bind a copy of the heavy chain, and their extended N-terminal regions are held together by an array of light chain dimers. Interacts with DYNLL2; this interaction is essential for dynein-2-mediated retrograde trafficking of ciliary proteins. Interacts with DYNLRB1; this interaction is essential for dynein-2-mediated retrograde trafficking of ciliary proteins. Interacts (via the WD domains) with MAP3K7 and TAB3. Interacts (via WD domains) with TAB2 (via C-terminus). Interacts (via WD domains) with TRAF6 (via TRAF-type domains). Expressed in brain, thymus, heart, lung, liver, spleen, kidney, testis and intestine.

It is found in the cytoplasm. The protein resides in the cytoskeleton. Its subcellular location is the cilium basal body. It localises to the cilium axoneme. The protein localises to the cell projection. It is found in the cilium. The protein resides in the microtubule organizing center. Its subcellular location is the centrosome. It localises to the filopodium. In terms of biological role, acts as one of several non-catalytic accessory components of the cytoplasmic dynein 2 complex (dynein-2 complex), a motor protein complex that drives the movement of cargos along microtubules within cilia and flagella in concert with the intraflagellar transport (IFT) system. DYNC2I2 plays a major role in retrograde ciliary protein trafficking and in ciliogenesis. Required also to maintain a functional transition zone. Functionally, acts as a negative regulator of the Toll-like and IL-1R receptor signaling pathways. Inhibits the MAP3K7-induced NF-kappa-B activation pathway. Inhibits MAP3K7 phosphorylation at 'Thr-184' and 'Thr-187' upon Il-1 beta stimulation. This is Cytoplasmic dynein 2 intermediate chain 2 (Dync2i2) from Mus musculus (Mouse).